The following is a 618-amino-acid chain: DNA ligase 2 (618 aa).

Residues 197-208 show a composition bias toward basic and acidic residues; that stretch reads DKKTLESREDAK. The disordered stretch occupies residues 197-250; that stretch reads DKKTLESREDAKSVPPASQPEITNKISGDTSPNTSESVQTKKSDPDTSSNVDPS. Over residues 216 to 234 the composition is skewed to polar residues; it reads PEITNKISGDTSPNTSESV. An ATP-binding site is contributed by glutamate 312. The N6-AMP-lysine intermediate role is filled by lysine 314. Residues arginine 319, arginine 334, glutamate 363, phenylalanine 403, arginine 476, and lysine 482 each contribute to the ATP site. The interval 459-480 is disordered; it reads HEGVMLKDPDSTYNPGSRGQHW.

This sequence belongs to the ATP-dependent DNA ligase family. Mg(2+) serves as cofactor.

It carries out the reaction ATP + (deoxyribonucleotide)n-3'-hydroxyl + 5'-phospho-(deoxyribonucleotide)m = (deoxyribonucleotide)n+m + AMP + diphosphate.. Its function is as follows. DNA ligase that seals nicks in double-stranded DNA during DNA replication, DNA recombination and DNA repair. The protein is DNA ligase 2 of Haloquadratum walsbyi (strain DSM 16790 / HBSQ001).